A 330-amino-acid chain; its full sequence is Ketol-acid reductoisomerase (NADP(+)) (330 aa).

The region spanning 1-182 is the KARI N-terminal Rossmann domain; sequence MKKVYYDQDA…GCTRAGVFET (182 aa). Residues 25-28, serine 51, serine 53, and 83-86 each bind NADP(+); these read YGSQ and DQIQ. Residue histidine 108 is part of the active site. NADP(+) is bound at residue glycine 134. Residues 183–328 enclose the KARI C-terminal knotted domain; it reads TFKEETETDL…AELRQMMPWL (146 aa). Residues aspartate 191, glutamate 195, glutamate 227, and glutamate 231 each coordinate Mg(2+). Serine 252 provides a ligand contact to substrate.

It belongs to the ketol-acid reductoisomerase family. Requires Mg(2+) as cofactor.

It carries out the reaction (2R)-2,3-dihydroxy-3-methylbutanoate + NADP(+) = (2S)-2-acetolactate + NADPH + H(+). The enzyme catalyses (2R,3R)-2,3-dihydroxy-3-methylpentanoate + NADP(+) = (S)-2-ethyl-2-hydroxy-3-oxobutanoate + NADPH + H(+). The protein operates within amino-acid biosynthesis; L-isoleucine biosynthesis; L-isoleucine from 2-oxobutanoate: step 2/4. It functions in the pathway amino-acid biosynthesis; L-valine biosynthesis; L-valine from pyruvate: step 2/4. Its function is as follows. Involved in the biosynthesis of branched-chain amino acids (BCAA). Catalyzes an alkyl-migration followed by a ketol-acid reduction of (S)-2-acetolactate (S2AL) to yield (R)-2,3-dihydroxy-isovalerate. In the isomerase reaction, S2AL is rearranged via a Mg-dependent methyl migration to produce 3-hydroxy-3-methyl-2-ketobutyrate (HMKB). In the reductase reaction, this 2-ketoacid undergoes a metal-dependent reduction by NADPH to yield (R)-2,3-dihydroxy-isovalerate. This Carboxydothermus hydrogenoformans (strain ATCC BAA-161 / DSM 6008 / Z-2901) protein is Ketol-acid reductoisomerase (NADP(+)).